A 920-amino-acid chain; its full sequence is MEKTYDPKAIEKKWADYWEKRQLSKPTAQGSPYCIMLPPPNVTGTLHMGHGFQQTLMDTLIRYHRMKGERTLWQGGTDHAGIATQMVVEQQLAQEDLTREDLGRQAFIKRVWEWRERSGGKITHQMRRLGVSIDWSRERFSMDEGLSRATTEAFIRLHHEGLIYRGKRLVNWDPKLNTAISDLEVVTEEVEGHLWHIRYPLAEGSGHLIIATTRPETLLGDVAIAVHPQDERYQPFVGKKVRLPLTDRTIPVIADEAVDKEFGTGSLKITPGHDFNDYEIGQRHQLPLINILTSEGYLNENVPEPYRGLERFEARKKIIADLQRENLLEKTEPYRVPVPRGERSGVIIEPLLTDQWFIKMEALAKPAMEAVESGELKFIPKNWEKTYLQWLSNIQDWCISRQLWWGHRLPVWYDEEKNSYVGRSREEILKKYHLSPDVKLQQETDVLDTWFSASLWPFATLGWPEKTESFKTFYPTQVLVTGFDIIFFWVARMVMMGLKLTHKIPFHSVYIHGLIRDSQGRKMSKSKGNVIDPIDIIDGISLDALIEKRTHALLQPKMAKTIEKMTRKEFPNGIASFGTDALRFTFCALASRGRDINFDMGRIDGYRNFCNKIWNAARFVTMNTQEKDLNPEKPLSYSAADEWIRTRLQQTIKNAEEALSQYRFDLLAQTLYEFTWNEYCDWYVEFAKCILYDKQAKPAQLRGTRVALLEVLEILLRLLHPVMPFITEEIWQTVAPLAGKEGKSIMVEHWPQFNIHEMNYDAKVEIEWVKNVITAIRTLRAEIGISPAKRIPVIFGKGDEKDKKRIAKMKSYIKTLGKVSQLRFAKHDDCFSATATGIVERLEIHIPLAGVIDKQTEIARLKKEISKLQKEEEKSLKKLDNPNYLQRAPQEVVEKERLSLEKTQNALKKLQSQYASIESL.

The 'HIGH' region motif lies at 40-50; that stretch reads PNVTGTLHMGH. The 'KMSKS' region signature appears at 522–526; it reads KMSKS. Residue lysine 525 coordinates ATP. Coiled coils occupy residues 642-668 and 849-920; these read EWIR…DLLA and AGVI…IESL.

Belongs to the class-I aminoacyl-tRNA synthetase family. ValS type 1 subfamily. Monomer.

It is found in the cytoplasm. The enzyme catalyses tRNA(Val) + L-valine + ATP = L-valyl-tRNA(Val) + AMP + diphosphate. Catalyzes the attachment of valine to tRNA(Val). As ValRS can inadvertently accommodate and process structurally similar amino acids such as threonine, to avoid such errors, it has a 'posttransfer' editing activity that hydrolyzes mischarged Thr-tRNA(Val) in a tRNA-dependent manner. The chain is Valine--tRNA ligase from Coxiella burnetii (strain RSA 493 / Nine Mile phase I).